Here is a 421-residue protein sequence, read N- to C-terminus: Testin (421 aa).

The 108-residue stretch at 92–199 folds into the PET domain; that stretch reads MILTNPVAAK…GDVKLPCEMD (108 aa). 3 LIM zinc-binding domains span residues 234 to 297, 299 to 359, and 362 to 421; these read YSCY…CDSE, PRCA…NHAV, and QGCH…KRMS.

It belongs to the prickle / espinas / testin family. As to quaternary structure, interacts via LIM domain 1 with ZYX. Interacts (via LIM domain 3) with ENAH and VASP. Interacts with ALKBH4, talin, actin, alpha-actinin, GRIP1 and PXN. Interacts (via LIM domain 2) with ACTL7A (via N-terminus). Heterodimer with ACTL7A; the heterodimer interacts with ENAH to form a heterotrimer.

The protein localises to the cytoplasm. It localises to the cell junction. The protein resides in the focal adhesion. Scaffold protein that may play a role in cell adhesion, cell spreading and in the reorganization of the actin cytoskeleton. Plays a role in the regulation of cell proliferation. May act as a tumor suppressor. This is Testin (TES) from Nomascus leucogenys (Northern white-cheeked gibbon).